Consider the following 340-residue polypeptide: Ferredoxin--NADP reductase (340 aa).

7 residues coordinate FAD: D33, Q41, Y46, A86, F120, D286, and T327.

It belongs to the ferredoxin--NADP reductase type 2 family. As to quaternary structure, homodimer. Requires FAD as cofactor.

The enzyme catalyses 2 reduced [2Fe-2S]-[ferredoxin] + NADP(+) + H(+) = 2 oxidized [2Fe-2S]-[ferredoxin] + NADPH. The polypeptide is Ferredoxin--NADP reductase (Rickettsia rickettsii (strain Sheila Smith)).